Here is a 144-residue protein sequence, read N- to C-terminus: Large ribosomal subunit protein uL15 (144 aa).

The tract at residues 1-57 (MELNNIKPADGAKKDKRRVGRGIGSGLGKTAGRGHKGQKSRAGGFHKVGFEGGQMPM) is disordered. Over residues 21–31 (RGIGSGLGKTA) the composition is skewed to gly residues.

Belongs to the universal ribosomal protein uL15 family. In terms of assembly, part of the 50S ribosomal subunit.

Functionally, binds to the 23S rRNA. This is Large ribosomal subunit protein uL15 from Thiobacillus denitrificans (strain ATCC 25259 / T1).